The sequence spans 210 residues: Pyridoxine/pyridoxamine 5'-phosphate oxidase (210 aa).

Residues 7–10 (REDY) and lysine 65 contribute to the substrate site. FMN contacts are provided by residues 60 to 65 (RMVLLK), 75 to 76 (FT), arginine 81, lysine 82, and glutamine 104. 3 residues coordinate substrate: tyrosine 122, arginine 126, and serine 130. Residues 139-140 (QS) and tryptophan 183 each bind FMN. 189–191 (RLH) contacts substrate. Arginine 193 lines the FMN pocket.

Belongs to the pyridoxamine 5'-phosphate oxidase family. As to quaternary structure, homodimer. Requires FMN as cofactor.

The enzyme catalyses pyridoxamine 5'-phosphate + O2 + H2O = pyridoxal 5'-phosphate + H2O2 + NH4(+). The catalysed reaction is pyridoxine 5'-phosphate + O2 = pyridoxal 5'-phosphate + H2O2. It participates in cofactor metabolism; pyridoxal 5'-phosphate salvage; pyridoxal 5'-phosphate from pyridoxamine 5'-phosphate: step 1/1. Its pathway is cofactor metabolism; pyridoxal 5'-phosphate salvage; pyridoxal 5'-phosphate from pyridoxine 5'-phosphate: step 1/1. Its function is as follows. Catalyzes the oxidation of either pyridoxine 5'-phosphate (PNP) or pyridoxamine 5'-phosphate (PMP) into pyridoxal 5'-phosphate (PLP). This Neisseria gonorrhoeae (strain ATCC 700825 / FA 1090) protein is Pyridoxine/pyridoxamine 5'-phosphate oxidase.